A 153-amino-acid polypeptide reads, in one-letter code: Ribonuclease H (153 aa).

One can recognise an RNase H type-1 domain in the interval 1 to 142; the sequence is MTDQIEIFTD…ADELARRGVD (142 aa). 4 residues coordinate Mg(2+): Asp-10, Glu-48, Asp-70, and Asp-134.

The protein belongs to the RNase H family. Monomer. It depends on Mg(2+) as a cofactor.

The protein resides in the cytoplasm. The enzyme catalyses Endonucleolytic cleavage to 5'-phosphomonoester.. Functionally, endonuclease that specifically degrades the RNA of RNA-DNA hybrids. The protein is Ribonuclease H of Aromatoleum aromaticum (strain DSM 19018 / LMG 30748 / EbN1) (Azoarcus sp. (strain EbN1)).